Consider the following 412-residue polypeptide: Delta-aminolevulinic acid dehydratase, chloroplastic (412 aa).

The N-terminal 48 residues, 1–48 (MASSIPNAPSAFNSQSYVGLRAPLRTFNFSSPQAAKIPRSQRLFVVRA), are a transit peptide targeting the chloroplast. The interval 68–101 (VRPRPAAPVGTPVVPSLPLHRRPRRNRKSPALRS) is disordered. Residues 86–97 (LHRRPRRNRKSP) are compositionally biased toward basic residues. Lysine 280 serves as the catalytic Schiff-base intermediate with substrate. 5-aminolevulinate contacts are provided by arginine 290 and lysine 302. Residue glutamate 318 coordinates Mg(2+). Residue lysine 333 is the Schiff-base intermediate with substrate of the active site. 5-aminolevulinate-binding residues include serine 359 and tyrosine 398.

The protein belongs to the ALAD family. In terms of assembly, homooctamer. Mg(2+) serves as cofactor. Leaves and root nodules.

It is found in the plastid. Its subcellular location is the chloroplast. It catalyses the reaction 2 5-aminolevulinate = porphobilinogen + 2 H2O + H(+). It participates in porphyrin-containing compound metabolism; protoporphyrin-IX biosynthesis; coproporphyrinogen-III from 5-aminolevulinate: step 1/4. Functionally, is committed to plant tetrapyrrole synthesis. Its function is as follows. Catalyzes an early step in the biosynthesis of tetrapyrroles. Binds two molecules of 5-aminolevulinate per subunit, each at a distinct site, and catalyzes their condensation to form porphobilinogen. The chain is Delta-aminolevulinic acid dehydratase, chloroplastic (HEMB) from Glycine max (Soybean).